Here is a 540-residue protein sequence, read N- to C-terminus: Phenylalanine--tRNA ligase beta subunit (540 aa).

Positions 268 to 343 (LQHKSIKITA…ITYGYNNLSP (76 aa)) constitute a B5 domain. D321, D327, E330, and E331 together coordinate Mg(2+).

This sequence belongs to the phenylalanyl-tRNA synthetase beta subunit family. Type 2 subfamily. Tetramer of two alpha and two beta subunits. It depends on Mg(2+) as a cofactor.

The protein localises to the cytoplasm. The enzyme catalyses tRNA(Phe) + L-phenylalanine + ATP = L-phenylalanyl-tRNA(Phe) + AMP + diphosphate + H(+). The protein is Phenylalanine--tRNA ligase beta subunit of Sulfurisphaera tokodaii (strain DSM 16993 / JCM 10545 / NBRC 100140 / 7) (Sulfolobus tokodaii).